Here is a 213-residue protein sequence, read N- to C-terminus: uncharacterized protein (213 aa).

Positions 53, 74, and 97 each coordinate S-adenosyl-L-methionine.

Belongs to the methyltransferase superfamily. YrrT family.

Could be a S-adenosyl-L-methionine-dependent methyltransferase. This is an uncharacterized protein from Bacillus velezensis (strain DSM 23117 / BGSC 10A6 / LMG 26770 / FZB42) (Bacillus amyloliquefaciens subsp. plantarum).